The following is an 82-amino-acid chain: uncharacterized protein (82 aa).

This is an uncharacterized protein from Bacillus subtilis (strain 168).